A 562-amino-acid polypeptide reads, in one-letter code: Formate--tetrahydrofolate ligase (562 aa).

71–78 serves as a coordination point for ATP; that stretch reads TPAGEGKS.

The protein belongs to the formate--tetrahydrofolate ligase family.

The catalysed reaction is (6S)-5,6,7,8-tetrahydrofolate + formate + ATP = (6R)-10-formyltetrahydrofolate + ADP + phosphate. It functions in the pathway one-carbon metabolism; tetrahydrofolate interconversion. This is Formate--tetrahydrofolate ligase from Bacillus cereus (strain ATCC 14579 / DSM 31 / CCUG 7414 / JCM 2152 / NBRC 15305 / NCIMB 9373 / NCTC 2599 / NRRL B-3711).